The sequence spans 202 residues: Vitelline membrane outer layer protein 1 homolog (202 aa).

A signal peptide spans 1-24 (MERGAGAKLLPLLLLLRATGFTCA). 4 disulfides stabilise this stretch: Cys53–Cys86, Cys114–Cys146, Cys169–Cys199, and Cys174–Cys200.

Belongs to the VMO1 family.

The protein resides in the secreted. This Homo sapiens (Human) protein is Vitelline membrane outer layer protein 1 homolog (VMO1).